The primary structure comprises 158 residues: NADH-quinone oxidoreductase subunit B (158 aa).

Cys-37, Cys-38, Cys-102, and Cys-132 together coordinate [4Fe-4S] cluster.

It belongs to the complex I 20 kDa subunit family. NDH-1 is composed of 14 different subunits. Subunits NuoB, C, D, E, F, and G constitute the peripheral sector of the complex. [4Fe-4S] cluster serves as cofactor.

Its subcellular location is the cell inner membrane. The catalysed reaction is a quinone + NADH + 5 H(+)(in) = a quinol + NAD(+) + 4 H(+)(out). Functionally, NDH-1 shuttles electrons from NADH, via FMN and iron-sulfur (Fe-S) centers, to quinones in the respiratory chain. The immediate electron acceptor for the enzyme in this species is believed to be ubiquinone. Couples the redox reaction to proton translocation (for every two electrons transferred, four hydrogen ions are translocated across the cytoplasmic membrane), and thus conserves the redox energy in a proton gradient. This chain is NADH-quinone oxidoreductase subunit B, found in Thiobacillus denitrificans (strain ATCC 25259 / T1).